A 347-amino-acid polypeptide reads, in one-letter code: Ribosomal RNA small subunit methyltransferase C (347 aa).

This sequence belongs to the methyltransferase superfamily. RsmC family. In terms of assembly, monomer.

The protein localises to the cytoplasm. The enzyme catalyses guanosine(1207) in 16S rRNA + S-adenosyl-L-methionine = N(2)-methylguanosine(1207) in 16S rRNA + S-adenosyl-L-homocysteine + H(+). Its function is as follows. Specifically methylates the guanine in position 1207 of 16S rRNA in the 30S particle. This Yersinia enterocolitica serotype O:8 / biotype 1B (strain NCTC 13174 / 8081) protein is Ribosomal RNA small subunit methyltransferase C.